A 140-amino-acid chain; its full sequence is Required for drug-induced death protein 1 (140 aa).

Residues 1 to 95 are disordered; the sequence is MTVGARLRSK…DKPKKRYRRK (95 aa). Positions 29–53 are enriched in acidic residues; it reads EETDAIVEHLEGEDEDPESQDCERE. The helical transmembrane segment at 118–140 threads the bilayer; that stretch reads LQGFAAAYSAPFGVATSVVSFVR.

The protein localises to the membrane. Functionally, regulates drug efflux through modulation of ABCB1 localization and activity. In Rattus norvegicus (Rat), this protein is Required for drug-induced death protein 1.